We begin with the raw amino-acid sequence, 104 residues long: MCLTRSDVYAYVRETINKRKHEVDVSNVLAHIFEFDFQEHVEYIRANIDKALITVGGEQPYCKRLSYHIKRINKIFNLITSLETEYKAAVSKYDGDKHHYERSN.

It belongs to the baculoviridae LEF-11 family.

Involved in late/very late gene activation. The sequence is that of Late expression factor 11 (LEF-11) from Spodoptera exigua nuclear polyhedrosis virus (strain US) (SeMNPV).